Consider the following 1050-residue polypeptide: Toll-like receptor 7 (1050 aa).

An N-terminal signal peptide occupies residues 1–26 (MVFSMWTRKRQILIFLNMLLVSRVFG). At 27 to 837 (FRWFPKTLPC…SLDLYTCELD (811 aa)) the chain is on the extracellular side. 20 LRR repeats span residues 42 to 64 (IPEAHVIVDCTDKHLTEIPEGIP), 65 to 87 (TNTTNLTLTINHIPSISPDSFRR), 89 to 111 (NHLEEIDLRCNCVPVLLGSKANV), 126 to 149 (LSDLKALYLDGNQLLEIPQDLPSS), 151 to 170 (HLLSLEANNIFSITKENLTE), 171 to 195 (LVNIETLYLGQNCYYRNPCNVSYSI), 203 to 226 (MRNLKVLSLKDNNVTAVPTTLPPN), 228 to 247 (LELYLYNNIIKKIQENDFNN), 248 to 273 (LNELQVLDLSGNCPRCYNVPYPCTPC), 275 to 289 (NNSPLQIHDNAFNSL), 290 to 312 (TELKVLRLHSNSLQHVPPTWFKN), 314 to 337 (RNLQELDLSQNYLAREIEEAKFLH), 339 to 364 (LPNLVELDFSFNYELQVYHASITLPH), 369 to 392 (LENLKILRVKGYVFKELKNSSLSV), 396 to 419 (LPRLEVLDLGTNFIKIADLNIFKH), 421 to 443 (ENLKLIDLSVNKISPSEESREVG), 493 to 516 (HIYGQTLDLSRNNIFFIKPSDFQH), 517 to 542 (LSFLKCLNLSGNTIGQTLNGSELWPL), 543 to 565 (RELRYLDFSNNRLDLLYSTAFEE), and 567 to 589 (QSLEVLDLSSNSHYFQAEGITHM). Residues N66 and N69 are each glycosylated (N-linked (GlcNAc...) asparagine). N-linked (GlcNAc...) asparagine glycosylation is found at N167, N190, and N215. An N-linked (GlcNAc...) asparagine glycan is attached at N387. N524 and N535 each carry an N-linked (GlcNAc...) asparagine glycan. N-linked (GlcNAc...) asparagine glycosylation occurs at N591. LRR repeat units lie at residues 596 to 619 (LRLLDKLMMNDNDISTSASRTMES), 620 to 645 (DSLRILEFRGNHLDVLWRAGDNRYLD), 650 to 673 (LFNLEVLDISRNSLNSLPPEVFEG), 675 to 698 (PPNLKNLSLAKNGLKSFFWDRLQL), 699 to 722 (LKHLEILDLSHNQLTKVPERLANC), 724 to 746 (KSLTTLILKHNQIRQLTKYFLED), 747 to 770 (ALQLRYLDISSNKIQVIQKTSFPE), and 773 to 796 (LNNLEMLVLHHNRFLCNCDAVWFV). Residues N680 and N721 are each glycosylated (N-linked (GlcNAc...) asparagine). An N-linked (GlcNAc...) asparagine glycan is attached at N800. A helical membrane pass occupies residues 838–858 (LTNLILFSVSISSVLFLMVVM). Residues 859–1050 (TTSHLFFWDM…AYSQMFKETV (192 aa)) are Cytoplasmic-facing. The 145-residue stretch at 890–1034 (SCYDAFIVYD…YFWQCLKNAL (145 aa)) folds into the TIR domain.

Belongs to the Toll-like receptor family. In terms of assembly, homodimer. Interacts with MYD88 via their respective TIR domains. Interacts with UNC93B1. Interacts with SMPDL3B. In terms of processing, the first cleavage is performed by asparagine endopeptidase or cathepsin family members. This initial cleavage event is followed by a trimming event that is solely cathepsin mediated and required for optimal receptor signaling.

Its subcellular location is the endosome membrane. It localises to the endoplasmic reticulum membrane. The protein resides in the lysosome. The protein localises to the cytoplasmic vesicle. It is found in the phagosome. Its activity is regulated as follows. Activated by guanosine analogs including deoxyguanosine, 7-thia-8-oxoguanosine or 7-deazaguanosine in a RNA-independent manner. In terms of biological role, endosomal receptor that plays a key role in innate and adaptive immunity. Controls host immune response against pathogens through recognition of uridine-containing single strand RNAs (ssRNAs) of viral origin or guanosine analogs. Upon binding to agonists, undergoes dimerization that brings TIR domains from the two molecules into direct contact, leading to the recruitment of TIR-containing downstream adapter MYD88 through homotypic interaction. In turn, the Myddosome signaling complex is formed involving IRAK4, IRAK1, TRAF6, TRAF3 leading to activation of downstream transcription factors NF-kappa-B and IRF7 to induce pro-inflammatory cytokines and interferons, respectively. In plasmacytoid dendritic cells, RNASET2 endonuclease cooperates with PLD3 or PLD4 5'-&gt;3' exonucleases to process RNA and release 2',3'-cyclic guanosine monophosphate (2',3'-cGMP) and cytidine-rich RNA fragments that occupy TLR7 ligand-binding pockets and trigger a signaling-competent state. The protein is Toll-like receptor 7 (Tlr7) of Mus musculus (Mouse).